The sequence spans 132 residues: Minor structural pilin EpdB (132 aa).

Residues 1 to 4 (MSKG) constitute a propeptide that is removed on maturation. The QXSXEXXXL signature appears at 9 to 19 (EFIVLFLALLV).

The N-terminus is probably cleaved by the prepilin peptidase EppA, which recognizes the class III signal sequence.

It is found in the secreted. The protein resides in the cell surface. The protein localises to the fimbrium. In terms of biological role, minor component of the type IV-like pili. Essential for pili formation. This chain is Minor structural pilin EpdB, found in Methanococcus maripaludis (strain DSM 14266 / JCM 13030 / NBRC 101832 / S2 / LL).